The chain runs to 103 residues: Small ribosomal subunit protein uS10 (103 aa).

It belongs to the universal ribosomal protein uS10 family. As to quaternary structure, part of the 30S ribosomal subunit.

Functionally, involved in the binding of tRNA to the ribosomes. The polypeptide is Small ribosomal subunit protein uS10 (Hahella chejuensis (strain KCTC 2396)).